The primary structure comprises 265 residues: Anamorsin homolog (265 aa).

Residues Met-1 to Lys-147 form an N-terminal SAM-like domain region. The interval Lys-147–Leu-176 is linker. Cys-186, Cys-195, Cys-198, and Cys-200 together coordinate [2Fe-2S] cluster. The interval Cys-186–Cys-200 is fe-S binding site A. 4 residues coordinate [4Fe-4S] cluster: Cys-226, Cys-229, Cys-237, and Cys-240. Short sequence motifs (cx2C motif) lie at residues Cys-226–Cys-229 and Cys-237–Cys-240. The tract at residues Cys-226–Cys-240 is fe-S binding site B.

The protein belongs to the anamorsin family. In terms of assembly, monomer. [2Fe-2S] cluster serves as cofactor. The cofactor is [4Fe-4S] cluster.

The protein localises to the cytoplasm. It localises to the mitochondrion intermembrane space. Component of the cytosolic iron-sulfur (Fe-S) protein assembly (CIA) machinery. Required for the maturation of extramitochondrial Fe-S proteins. Part of an electron transfer chain functioning in an early step of cytosolic Fe-S biogenesis, facilitating the de novo assembly of a [4Fe-4S] cluster on the cytosolic Fe-S scaffold complex. Electrons are transferred from NADPH via a FAD- and FMN-containing diflavin oxidoreductase. Together with the diflavin oxidoreductase, also required for the assembly of the diferric tyrosyl radical cofactor of ribonucleotide reductase (RNR), probably by providing electrons for reduction during radical cofactor maturation in the catalytic small subunit. This Medicago truncatula (Barrel medic) protein is Anamorsin homolog.